The primary structure comprises 100 residues: Urease subunit gamma (100 aa).

This sequence belongs to the urease gamma subunit family. Heterotrimer of UreA (gamma), UreB (beta) and UreC (alpha) subunits. Three heterotrimers associate to form the active enzyme.

It localises to the cytoplasm. The enzyme catalyses urea + 2 H2O + H(+) = hydrogencarbonate + 2 NH4(+). The protein operates within nitrogen metabolism; urea degradation; CO(2) and NH(3) from urea (urease route): step 1/1. In Limosilactobacillus fermentum (Lactobacillus fermentum), this protein is Urease subunit gamma.